We begin with the raw amino-acid sequence, 189 residues long: UPF0398 protein LVIS_0849 (189 aa).

This sequence belongs to the UPF0398 family.

The protein is UPF0398 protein LVIS_0849 of Levilactobacillus brevis (strain ATCC 367 / BCRC 12310 / CIP 105137 / JCM 1170 / LMG 11437 / NCIMB 947 / NCTC 947) (Lactobacillus brevis).